The primary structure comprises 111 residues: Cytochrome c (111 aa).

Ala1 carries the N-acetylalanine modification. Heme c contacts are provided by Cys22, Cys25, and His26. The residue at position 80 (Lys80) is an N6,N6,N6-trimethyllysine. A heme c-binding site is contributed by Met88. At Lys94 the chain carries N6,N6,N6-trimethyllysine.

The protein belongs to the cytochrome c family. In terms of processing, binds 1 heme c group covalently per subunit.

The protein localises to the mitochondrion intermembrane space. In terms of biological role, electron carrier protein. The oxidized form of the cytochrome c heme group can accept an electron from the heme group of the cytochrome c1 subunit of cytochrome reductase. Cytochrome c then transfers this electron to the cytochrome oxidase complex, the final protein carrier in the mitochondrial electron-transport chain. The sequence is that of Cytochrome c from Nigella damascena (Love-in-a-mist).